The sequence spans 221 residues: Large ribosomal subunit protein uL1 (221 aa).

Belongs to the universal ribosomal protein uL1 family. As to quaternary structure, part of the 50S ribosomal subunit.

In terms of biological role, probably involved in E site tRNA release. Binds directly to 23S rRNA. Protein L1 is also a translational repressor protein, it controls the translation of its operon by binding to its mRNA. This is Large ribosomal subunit protein uL1 from Sulfolobus acidocaldarius (strain ATCC 33909 / DSM 639 / JCM 8929 / NBRC 15157 / NCIMB 11770).